We begin with the raw amino-acid sequence, 184 residues long: Adenylate kinase (184 aa).

12 to 17 lines the ATP pocket; it reads GAGKGT. Positions 32-61 are NMP; the sequence is STGELLRKEIDLDTDLGKQVKDIMNRGELV. Residues T33, R38, 59–61, 85–88, and Q92 contribute to the AMP site; these read ELV and GYPR. Positions 126-132 are LID; sequence IRGRKDD. R127 contacts ATP. Residues R129 and R140 each coordinate AMP. G168 lines the ATP pocket.

It belongs to the adenylate kinase family. In terms of assembly, monomer.

Its subcellular location is the cytoplasm. It carries out the reaction AMP + ATP = 2 ADP. The protein operates within purine metabolism; AMP biosynthesis via salvage pathway; AMP from ADP: step 1/1. In terms of biological role, catalyzes the reversible transfer of the terminal phosphate group between ATP and AMP. Plays an important role in cellular energy homeostasis and in adenine nucleotide metabolism. In Prochlorococcus marinus subsp. pastoris (strain CCMP1986 / NIES-2087 / MED4), this protein is Adenylate kinase.